A 140-amino-acid polypeptide reads, in one-letter code: Organic hydroperoxide resistance protein-like 1 (140 aa).

The protein belongs to the OsmC/Ohr family.

The sequence is that of Organic hydroperoxide resistance protein-like 1 from Staphylococcus epidermidis (strain ATCC 35984 / DSM 28319 / BCRC 17069 / CCUG 31568 / BM 3577 / RP62A).